The primary structure comprises 428 residues: Something about silencing protein 10 (428 aa).

Residues 1 to 93 (MDSDGDDYVM…NTMDWGSKRS (93 aa)) form a disordered region. 2 stretches are compositionally biased toward acidic residues: residues 15–24 (QEYDDEEREI) and 46–62 (SDDDDDDDDDDEEEQQD). Phosphoserine occurs at positions 152, 323, 324, and 337. Residues 317–386 (GQQASVSSDD…LRNPRVKHRG (70 aa)) are disordered. The segment covering 324–336 (SDDDDNDDDDDAE) has biased composition (acidic residues). Over residues 344-353 (EEAGEEEEEE) the composition is skewed to acidic residues. Over residues 370 to 386 (TPHRKKELRNPRVKHRG) the composition is skewed to basic residues.

The protein belongs to the SAS10 family.

It localises to the nucleus. Functionally, essential for gene silencing: has a role in the structure of silenced chromatin. May be involved in gene regulation during development. Binds RNA. The sequence is that of Something about silencing protein 10 from Drosophila melanogaster (Fruit fly).